A 376-amino-acid chain; its full sequence is Chaperone protein DnaJ (376 aa).

The J domain occupies 5–70 (DYYEILGVSK…QKRAAYDQYG (66 aa)). The CR-type zinc-finger motif lies at 131–209 (GVTKEIRIPT…CHGHGRVERS (79 aa)). Residues cysteine 144, cysteine 147, cysteine 161, cysteine 164, cysteine 183, cysteine 186, cysteine 197, and cysteine 200 each coordinate Zn(2+). CXXCXGXG motif repeat units follow at residues 144–151 (CDVCHGSG), 161–168 (CPTCHGSG), 183–190 (CPHCQGRG), and 197–204 (CNKCHGHG).

This sequence belongs to the DnaJ family. As to quaternary structure, homodimer. Zn(2+) serves as cofactor.

The protein resides in the cytoplasm. Its function is as follows. Participates actively in the response to hyperosmotic and heat shock by preventing the aggregation of stress-denatured proteins and by disaggregating proteins, also in an autonomous, DnaK-independent fashion. Unfolded proteins bind initially to DnaJ; upon interaction with the DnaJ-bound protein, DnaK hydrolyzes its bound ATP, resulting in the formation of a stable complex. GrpE releases ADP from DnaK; ATP binding to DnaK triggers the release of the substrate protein, thus completing the reaction cycle. Several rounds of ATP-dependent interactions between DnaJ, DnaK and GrpE are required for fully efficient folding. Also involved, together with DnaK and GrpE, in the DNA replication of plasmids through activation of initiation proteins. The sequence is that of Chaperone protein DnaJ from Escherichia coli (strain K12 / MC4100 / BW2952).